Reading from the N-terminus, the 1014-residue chain is Probable LRR receptor-like serine/threonine-protein kinase At1g07650 (1014 aa).

Positions 1-23 (MIYLHRIYFIIVLFTLIFHGRLG) are cleaved as a signal peptide. The Extracellular portion of the chain corresponds to 24 to 619 (FSDNNKLHEA…KPPVYYDTKD (596 aa)). N76, N87, and N101 each carry an N-linked (GlcNAc...) asparagine glycan. LRR repeat units follow at residues 89-112 (SCHV…EFSK), 113-137 (LRHL…WASM), 139-160 (LEDL…LTRL), 161-184 (TMLR…IGQL), 186-207 (HLEK…KLGL), 208-234 (LKNL…NWTR), 256-279 (LTSL…PLKN), 280-304 (LESI…IGDL), 305-327 (KKLK…SFEN), 329-352 (KKAD…FVER), and 354-376 (KNVD…DCNR). Residue N165 is glycosylated (N-linked (GlcNAc...) asparagine). 3 N-linked (GlcNAc...) asparagine glycosylation sites follow: N210, N220, and N231. N-linked (GlcNAc...) asparagine glycosylation is found at N362, N389, N474, N481, and N511. An LRR 12 repeat occupies 516-539 (LHFAEIIFTDDNTLYSLGKRLFDI). N570 carries N-linked (GlcNAc...) asparagine glycosylation. A helical transmembrane segment spans residues 620 to 640 (IILKVGVPVAAATLLLFIIVG). Residues 641–1014 (VFWKKRRDKN…DAEEKTGLLD (374 aa)) are Cytoplasmic-facing. T667 carries the phosphothreonine modification. The Protein kinase domain occupies 678–960 (FDVTRKIGEG…EGKTAMQELL (283 aa)). ATP-binding positions include 684–692 (IGEGGFGSV) and K706. A Phosphotyrosine modification is found at Y751. D805 serves as the catalytic Proton acceptor. Residues S809 and S838 each carry the phosphoserine modification. Residues T839 and T844 each carry the phosphothreonine modification. A Phosphotyrosine modification is found at Y852. S989 bears the Phosphoserine mark. Over residues 989–1002 (SFSTSGPRTASANS) the composition is skewed to polar residues. The interval 989–1014 (SFSTSGPRTASANSLVDAEEKTGLLD) is disordered.

This sequence belongs to the protein kinase superfamily. Ser/Thr protein kinase family.

The protein localises to the membrane. It carries out the reaction L-seryl-[protein] + ATP = O-phospho-L-seryl-[protein] + ADP + H(+). It catalyses the reaction L-threonyl-[protein] + ATP = O-phospho-L-threonyl-[protein] + ADP + H(+). The sequence is that of Probable LRR receptor-like serine/threonine-protein kinase At1g07650 from Arabidopsis thaliana (Mouse-ear cress).